Consider the following 122-residue polypeptide: MSLTKEQILDAISNMSVMDIVRLTSMMEEKFGVSTASLTTVEPDTSEAIVEEQTEFNVFLTAIGNNKIPVIKTVRSITGLGLKEAKELVESAPVILKESINKDDAETLKKTLETVGASVEIK.

It belongs to the bacterial ribosomal protein bL12 family. Homodimer. Part of the ribosomal stalk of the 50S ribosomal subunit. Forms a multimeric L10(L12)X complex, where L10 forms an elongated spine to which 2 to 4 L12 dimers bind in a sequential fashion. Binds GTP-bound translation factors.

In terms of biological role, forms part of the ribosomal stalk which helps the ribosome interact with GTP-bound translation factors. Is thus essential for accurate translation. The sequence is that of Large ribosomal subunit protein bL12 from Blochmanniella pennsylvanica (strain BPEN).